The sequence spans 144 residues: uncharacterized protein (144 aa).

N-linked (GlcNAc...) asparagine glycans are attached at residues N14 and N15. A helical transmembrane segment spans residues 90–110 (FSWFIFGLFIACLLLCITLVL). The interval 120–144 (NKATEVVPSSNIDDEEKQLSLSDMI) is disordered.

It is found in the membrane. This is an uncharacterized protein from Saccharomyces cerevisiae (strain ATCC 204508 / S288c) (Baker's yeast).